The primary structure comprises 92 residues: Small ribosomal subunit protein uS19 (92 aa).

This sequence belongs to the universal ribosomal protein uS19 family.

Its function is as follows. Protein S19 forms a complex with S13 that binds strongly to the 16S ribosomal RNA. This is Small ribosomal subunit protein uS19 from Legionella pneumophila (strain Paris).